The primary structure comprises 615 residues: DNA mismatch repair protein MutL (615 aa).

Positions 362–397 (HFAEPAVREPVAPRYTPAPASGSRPAAPWPNAQPGY) are disordered. Residues 378 to 391 (PAPASGSRPAAPWP) show a composition bias toward low complexity.

The protein belongs to the DNA mismatch repair MutL/HexB family.

In terms of biological role, this protein is involved in the repair of mismatches in DNA. It is required for dam-dependent methyl-directed DNA mismatch repair. May act as a 'molecular matchmaker', a protein that promotes the formation of a stable complex between two or more DNA-binding proteins in an ATP-dependent manner without itself being part of a final effector complex. The sequence is that of DNA mismatch repair protein MutL from Escherichia coli O17:K52:H18 (strain UMN026 / ExPEC).